A 329-amino-acid chain; its full sequence is RING finger protein 225 (329 aa).

Residues 1 to 55 (MPCPRPFWLRHSRAPQGSGPSSPGSLSAPRSPSRGEDQEEEEEEEGDGSPGSGPI) are disordered. Low complexity predominate over residues 14-32 (APQGSGPSSPGSLSAPRSP). Over residues 37–47 (DQEEEEEEEGD) the composition is skewed to acidic residues. The segment at 64-112 (CLICVSSFDGVFKLPKRLDCGHVFCLECLARLSLATAGGGNAVACPVCR) adopts an RING-type zinc-finger fold. A disordered region spans residues 122–181 (GLPALPTQSGLLPRDARAPPSRQGSVRFDRRRGLLYLRPPPPPPGPRKARAPPPPPPLRL). The span at 159-179 (RPPPPPPGPRKARAPPPPPPL) shows a compositional bias: pro residues. Residues 203–223 (ALAVLVAAGLVVSGVYIFFLI) traverse the membrane as a helical segment. A disordered region spans residues 248–329 (FPPRPPPGSP…RGARRLWGSQ (82 aa)). Residues 281–293 (DALEPEAGPEDPA) show a composition bias toward acidic residues. Basic and acidic residues predominate over residues 294–304 (EAERTLDRRSD).

It is found in the membrane. This is RING finger protein 225 from Homo sapiens (Human).